Here is a 183-residue protein sequence, read N- to C-terminus: 3-hydroxydecanoyl-[acyl-carrier-protein] dehydratase (183 aa).

The active site involves H77.

Belongs to the thioester dehydratase family. FabA subfamily. As to quaternary structure, homodimer.

Its subcellular location is the cytoplasm. It carries out the reaction a (3R)-hydroxyacyl-[ACP] = a (2E)-enoyl-[ACP] + H2O. It catalyses the reaction (3R)-hydroxydecanoyl-[ACP] = (2E)-decenoyl-[ACP] + H2O. The enzyme catalyses (2E)-decenoyl-[ACP] = (3Z)-decenoyl-[ACP]. It participates in lipid metabolism; fatty acid biosynthesis. Its function is as follows. Necessary for the introduction of cis unsaturation into fatty acids. Catalyzes the dehydration of (3R)-3-hydroxydecanoyl-ACP to E-(2)-decenoyl-ACP and then its isomerization to Z-(3)-decenoyl-ACP. Can catalyze the dehydratase reaction for beta-hydroxyacyl-ACPs with saturated chain lengths up to 16:0, being most active on intermediate chain length. This is 3-hydroxydecanoyl-[acyl-carrier-protein] dehydratase from Hahella chejuensis (strain KCTC 2396).